Consider the following 237-residue polypeptide: Ubiquitin-conjugating enzyme E2 34 (237 aa).

The UBC core domain maps to 5–162 (ACIKRLQKEY…FPEYVEKYNQ (158 aa)). Cys-87 functions as the Glycyl thioester intermediate in the catalytic mechanism. A disordered region spans residues 168-207 (QATTQLTTPESPQKSDTKVESEKTIDPTKGDSEGGLKERK). Residues 180 to 204 (QKSDTKVESEKTIDPTKGDSEGGLK) show a composition bias toward basic and acidic residues. Residues 214–234 (LPAWIILLLVSVFGVVMALPL) traverse the membrane as a helical segment.

This sequence belongs to the ubiquitin-conjugating enzyme family.

It localises to the membrane. The catalysed reaction is S-ubiquitinyl-[E1 ubiquitin-activating enzyme]-L-cysteine + [E2 ubiquitin-conjugating enzyme]-L-cysteine = [E1 ubiquitin-activating enzyme]-L-cysteine + S-ubiquitinyl-[E2 ubiquitin-conjugating enzyme]-L-cysteine.. It functions in the pathway protein modification; protein ubiquitination. Functionally, accepts the ubiquitin from the E1 complex and catalyzes its covalent attachment to other proteins. This Arabidopsis thaliana (Mouse-ear cress) protein is Ubiquitin-conjugating enzyme E2 34 (UBC34).